A 272-amino-acid chain; its full sequence is 3-methyl-2-oxobutanoate hydroxymethyltransferase (272 aa).

Aspartate 42 and aspartate 86 together coordinate Mg(2+). 3-methyl-2-oxobutanoate-binding positions include 42–43 (DS), aspartate 86, and lysine 116. Glutamate 118 contacts Mg(2+). Residue glutamate 185 is the Proton acceptor of the active site.

This sequence belongs to the PanB family. In terms of assembly, homodecamer; pentamer of dimers. It depends on Mg(2+) as a cofactor.

It is found in the cytoplasm. The enzyme catalyses 3-methyl-2-oxobutanoate + (6R)-5,10-methylene-5,6,7,8-tetrahydrofolate + H2O = 2-dehydropantoate + (6S)-5,6,7,8-tetrahydrofolate. Its pathway is cofactor biosynthesis; (R)-pantothenate biosynthesis; (R)-pantoate from 3-methyl-2-oxobutanoate: step 1/2. Functionally, catalyzes the reversible reaction in which hydroxymethyl group from 5,10-methylenetetrahydrofolate is transferred onto alpha-ketoisovalerate to form ketopantoate. This Prochlorococcus marinus (strain NATL1A) protein is 3-methyl-2-oxobutanoate hydroxymethyltransferase.